A 356-amino-acid chain; its full sequence is Tyrosine recombinase XerS (356 aa).

One can recognise a Core-binding (CB) domain in the interval 16–121 (LMPWYVLEYY…ALSSLYKYLT (106 aa)). Positions 169-354 (GFLTYIDQEH…VNDEQKNALD (186 aa)) constitute a Tyr recombinase domain. Active-site residues include arginine 210, lysine 234, histidine 306, arginine 309, and histidine 332. Tyrosine 341 acts as the O-(3'-phospho-DNA)-tyrosine intermediate in catalysis.

This sequence belongs to the 'phage' integrase family. XerS subfamily.

The protein localises to the cytoplasm. FtsK is required for recombination. Functionally, site-specific tyrosine recombinase, which acts by catalyzing the cutting and rejoining of the recombining DNA molecules. Essential to convert dimers of the bacterial chromosome into monomers to permit their segregation at cell division. This chain is Tyrosine recombinase XerS, found in Streptococcus pneumoniae serotype 19F (strain G54).